We begin with the raw amino-acid sequence, 162 residues long: 2-C-methyl-D-erythritol 2,4-cyclodiphosphate synthase (162 aa).

Residues Asp10 and His12 each contribute to the a divalent metal cation site. 4-CDP-2-C-methyl-D-erythritol 2-phosphate-binding positions include 10–12 (DVH) and 36–37 (HS). His44 is a binding site for a divalent metal cation. Residues 58–60 (DIG), 63–67 (FSDTD), and Arg144 each bind 4-CDP-2-C-methyl-D-erythritol 2-phosphate.

The protein belongs to the IspF family. In terms of assembly, homotrimer. Requires a divalent metal cation as cofactor.

It catalyses the reaction 4-CDP-2-C-methyl-D-erythritol 2-phosphate = 2-C-methyl-D-erythritol 2,4-cyclic diphosphate + CMP. It participates in isoprenoid biosynthesis; isopentenyl diphosphate biosynthesis via DXP pathway; isopentenyl diphosphate from 1-deoxy-D-xylulose 5-phosphate: step 4/6. Functionally, involved in the biosynthesis of isopentenyl diphosphate (IPP) and dimethylallyl diphosphate (DMAPP), two major building blocks of isoprenoid compounds. Catalyzes the conversion of 4-diphosphocytidyl-2-C-methyl-D-erythritol 2-phosphate (CDP-ME2P) to 2-C-methyl-D-erythritol 2,4-cyclodiphosphate (ME-CPP) with a corresponding release of cytidine 5-monophosphate (CMP). The protein is 2-C-methyl-D-erythritol 2,4-cyclodiphosphate synthase of Burkholderia thailandensis (strain ATCC 700388 / DSM 13276 / CCUG 48851 / CIP 106301 / E264).